The primary structure comprises 83 residues: Non-muscle caldesmon (83 aa).

Basic and acidic residues-rich tracts occupy residues 1 to 44 and 62 to 76; these read QTSE…KEEK and NQLKDEKTKKDKESK. The segment at 1-63 is myosin and calmodulin-binding; that stretch reads QTSEKEGRSE…PKPGSIEENQ (63 aa). Residues 1-83 are disordered; the sequence is QTSEKEGRSE…ESKNILSLCL (83 aa).

Post-translationally, in non-muscle cells, phosphorylation by CDC2 during mitosis causes caldesmon to dissociate from microfilaments. Phosphorylation reduces caldesmon binding to actin, myosin, and calmodulin as well as its inhibition of actomyosin ATPase activity. Phosphorylation also occurs in both quiescent and dividing smooth muscle cells with similar effects on the interaction with actin and calmodulin and on microfilaments reorganization.

Its subcellular location is the cytoplasm. It localises to the cytoskeleton. The protein localises to the myofibril. The protein resides in the stress fiber. Actin- and myosin-binding protein implicated in the regulation of actomyosin interactions in smooth muscle and nonmuscle cells (could act as a bridge between myosin and actin filaments). Stimulates actin binding of tropomyosin which increases the stabilization of actin filament structure. In muscle tissues, inhibits the actomyosin ATPase by binding to F-actin. This inhibition is attenuated by calcium-calmodulin and is potentiated by tropomyosin. Interacts with actin, myosin, two molecules of tropomyosin and with calmodulin. Also plays an essential role during cellular mitosis and receptor capping. This chain is Non-muscle caldesmon (CALD1), found in Bos taurus (Bovine).